Consider the following 560-residue polypeptide: Chaperonin GroEL 2 (560 aa).

ATP-binding positions include 29–32 (TLGP), 86–90 (DGTTT), Gly-413, 478–480 (NAA), and Asp-494.

It belongs to the chaperonin (HSP60) family. In terms of assembly, forms a cylinder of 14 subunits composed of two heptameric rings stacked back-to-back. Interacts with the co-chaperonin GroES.

It is found in the cytoplasm. It carries out the reaction ATP + H2O + a folded polypeptide = ADP + phosphate + an unfolded polypeptide.. In terms of biological role, together with its co-chaperonin GroES, plays an essential role in assisting protein folding. The GroEL-GroES system forms a nano-cage that allows encapsulation of the non-native substrate proteins and provides a physical environment optimized to promote and accelerate protein folding. The chain is Chaperonin GroEL 2 from Nostoc sp. (strain PCC 7120 / SAG 25.82 / UTEX 2576).